We begin with the raw amino-acid sequence, 44 residues long: Cytochrome b559 subunit beta (44 aa).

A helical membrane pass occupies residues 19 to 35 (WIAVHTLAVPSVFFLGA). Position 23 (His-23) interacts with heme.

This sequence belongs to the PsbE/PsbF family. Heterodimer of an alpha subunit and a beta subunit. PSII is composed of 1 copy each of membrane proteins PsbA, PsbB, PsbC, PsbD, PsbE, PsbF, PsbH, PsbI, PsbJ, PsbK, PsbL, PsbM, PsbT, PsbX, PsbY, PsbZ, Psb30/Ycf12, peripheral proteins PsbO, CyanoQ (PsbQ), PsbU, PsbV and a large number of cofactors. It forms dimeric complexes. The cofactor is heme b.

It is found in the cellular thylakoid membrane. Functionally, this b-type cytochrome is tightly associated with the reaction center of photosystem II (PSII). PSII is a light-driven water:plastoquinone oxidoreductase that uses light energy to abstract electrons from H(2)O, generating O(2) and a proton gradient subsequently used for ATP formation. It consists of a core antenna complex that captures photons, and an electron transfer chain that converts photonic excitation into a charge separation. The sequence is that of Cytochrome b559 subunit beta from Cyanothece sp. (strain PCC 7425 / ATCC 29141).